Consider the following 550-residue polypeptide: Calcium-dependent protein kinase 20 (550 aa).

Positions 1-58 are disordered; sequence MGNCCVTPEGSGRGRKKQQQEQKQKQKEPKQQQQQQKKGKKPNPFSIEYNRSSAPSGH. Gly2 is lipidated: N-myristoyl glycine. Basic and acidic residues predominate over residues 18–30; that stretch reads QQQEQKQKQKEPK. Positions 75-333 constitute a Protein kinase domain; the sequence is YELGGELGRG…AQQVLDHPWL (259 aa). Residues 81-89 and Lys104 contribute to the ATP site; that span reads LGRGEFGVT. The active-site Proton acceptor is the Asp199. Residues 339 to 369 form an autoinhibitory domain region; the sequence is APNVNLGETVKARLQQFSVMNKFKKHALRVI. EF-hand domains lie at 376–411, 412–447, 448–483, and 484–519; these read EEVA…LGHQ, MADA…LRKI, GNDE…DLGA, and NHEE…GTDW. Ca(2+) contacts are provided by Asp389, Asn391, Asp393, Met395, Glu400, Asp425, Asp427, Asn429, Ser431, Glu436, Asp461, Asn463, Ser465, Tyr467, Glu472, Asp497, Asp499, Asp501, Lys503, and Glu508.

This sequence belongs to the protein kinase superfamily. Ser/Thr protein kinase family. CDPK subfamily. In terms of tissue distribution, expressed in roots and leaf blades.

It is found in the membrane. The enzyme catalyses L-seryl-[protein] + ATP = O-phospho-L-seryl-[protein] + ADP + H(+). The catalysed reaction is L-threonyl-[protein] + ATP = O-phospho-L-threonyl-[protein] + ADP + H(+). Its activity is regulated as follows. Activated by calcium. Autophosphorylation may play an important role in the regulation of the kinase activity. In terms of biological role, may play a role in signal transduction pathways that involve calcium as a second messenger. The protein is Calcium-dependent protein kinase 20 of Oryza sativa subsp. japonica (Rice).